We begin with the raw amino-acid sequence, 157 residues long: Endoribonuclease YbeY (157 aa).

Zn(2+) contacts are provided by His-114, His-118, and His-124.

It belongs to the endoribonuclease YbeY family. Zn(2+) is required as a cofactor.

Its subcellular location is the cytoplasm. In terms of biological role, single strand-specific metallo-endoribonuclease involved in late-stage 70S ribosome quality control and in maturation of the 3' terminus of the 16S rRNA. In Yersinia pseudotuberculosis serotype O:1b (strain IP 31758), this protein is Endoribonuclease YbeY.